The sequence spans 77 residues: Small ribosomal subunit protein bS18 (77 aa).

This sequence belongs to the bacterial ribosomal protein bS18 family. As to quaternary structure, part of the 30S ribosomal subunit. Forms a tight heterodimer with protein bS6.

In terms of biological role, binds as a heterodimer with protein bS6 to the central domain of the 16S rRNA, where it helps stabilize the platform of the 30S subunit. The protein is Small ribosomal subunit protein bS18 of Lactobacillus helveticus (strain DPC 4571).